Here is a 989-residue protein sequence, read N- to C-terminus: Translation initiation factor IF-2 (989 aa).

Disordered regions lie at residues 43–219 and 234–379; these read KRRR…LQAR and EARR…GGAR. Over residues 72–87 the composition is skewed to polar residues; that stretch reads NTPNKDTAVTQTATKN. The span at 105–146 shows a compositional bias: low complexity; that stretch reads PKPVAAEATAQETSKAAPAAAQPVAEKEAAAPASAEAAKSAA. Basic and acidic residues predominate over residues 149–159; that stretch reads VTDRGAKKTTE. Residues 160–171 are compositionally biased toward polar residues; it reads KNGANASGNRPS. Residues 234–293 show a composition bias toward basic and acidic residues; the sequence is EARRREDRLKQEADLEEQRRIEEKRRLEAEAKVEAEKQAALKEKEKAEAKARAKAEKEAK. Positions 294–303 are enriched in low complexity; sequence AAQAKTAGAA. The span at 342–361 shows a compositional bias: basic and acidic residues; it reads PRREAPRPAMRDRKGEDRRQ. The region spanning 489 to 659 is the tr-type G domain; sequence SRPPVVTIMG…LLQAEMLELK (171 aa). Positions 498 to 505 are G1; it reads GHVDHGKT. Residue 498–505 coordinates GTP; it reads GHVDHGKT. A G2 region spans residues 523-527; the sequence is GITQH. The segment at 545 to 548 is G3; the sequence is DTPG. GTP contacts are provided by residues 545-549 and 599-602; these read DTPGH and NKMD. The G4 stretch occupies residues 599-602; the sequence is NKMD. The segment at 635-637 is G5; it reads SAA.

It belongs to the TRAFAC class translation factor GTPase superfamily. Classic translation factor GTPase family. IF-2 subfamily.

The protein localises to the cytoplasm. Its function is as follows. One of the essential components for the initiation of protein synthesis. Protects formylmethionyl-tRNA from spontaneous hydrolysis and promotes its binding to the 30S ribosomal subunits. Also involved in the hydrolysis of GTP during the formation of the 70S ribosomal complex. The chain is Translation initiation factor IF-2 from Zymomonas mobilis subsp. mobilis (strain ATCC 31821 / ZM4 / CP4).